Reading from the N-terminus, the 691-residue chain is DNA-directed RNA polymerase subunit beta' (691 aa).

Cysteine 69, cysteine 71, cysteine 87, and cysteine 90 together coordinate Zn(2+). 3 residues coordinate Mg(2+): aspartate 489, aspartate 491, and aspartate 493.

This sequence belongs to the RNA polymerase beta' chain family. RpoC1 subfamily. In terms of assembly, in plastids the minimal PEP RNA polymerase catalytic core is composed of four subunits: alpha, beta, beta', and beta''. When a (nuclear-encoded) sigma factor is associated with the core the holoenzyme is formed, which can initiate transcription. Mg(2+) serves as cofactor. It depends on Zn(2+) as a cofactor.

The protein resides in the plastid. The protein localises to the chloroplast. It carries out the reaction RNA(n) + a ribonucleoside 5'-triphosphate = RNA(n+1) + diphosphate. DNA-dependent RNA polymerase catalyzes the transcription of DNA into RNA using the four ribonucleoside triphosphates as substrates. This Jasminum nudiflorum (Winter jasmine) protein is DNA-directed RNA polymerase subunit beta'.